Consider the following 479-residue polypeptide: Cardiolipin synthase A (479 aa).

2 helical membrane passes run 8-28 and 38-58; these read FFGYLIGLIHLLGIIAALHAV and IAWALSLLFIPYFTLIPYLIF. PLD phosphodiesterase domains are found at residues 218 to 245 and 392 to 419; these read VNFRNHRKIVVVDGLRGFLGGHNVGDEY and QPGFLHQKVVLVDDEVSAIGSANLDNRS. Active-site residues include histidine 223, lysine 225, aspartate 230, histidine 397, lysine 399, and aspartate 404.

The protein belongs to the phospholipase D family. Cardiolipin synthase subfamily. ClsA sub-subfamily.

The protein resides in the cell inner membrane. It catalyses the reaction 2 a 1,2-diacyl-sn-glycero-3-phospho-(1'-sn-glycerol) = a cardiolipin + glycerol. Its function is as follows. Catalyzes the reversible phosphatidyl group transfer from one phosphatidylglycerol molecule to another to form cardiolipin (CL) (diphosphatidylglycerol) and glycerol. In Pseudomonas entomophila (strain L48), this protein is Cardiolipin synthase A.